The sequence spans 794 residues: Zinc finger Y-chromosomal protein 1 (794 aa).

Positions 380–389 (TKQKLKKKRR) match the Nuclear localization signal motif. C2H2-type zinc fingers lie at residues 411 to 433 (YPCM…MKNH), 442 to 464 (YRCT…LESH), 477 to 499 (LECE…KLTH), 508 to 531 (HICK…LAVH), 537 to 559 (HICV…MRTH), 565 to 588 (YLCQ…KTKH), 594 to 616 (FKCD…AILH), 622 to 645 (HQCL…ISVH), 651 to 673 (HKCE…EAAH), 679 to 702 (HQCR…LSVH), 708 to 730 (YRCK…MKTH), 736 to 759 (YQCE…ISIH), and 765 to 788 (HRCD…LKHH).

The protein belongs to the krueppel C2H2-type zinc-finger protein family. ZFX/ZFY subfamily.

Its subcellular location is the nucleus. Functionally, probable transcriptional activator. The polypeptide is Zinc finger Y-chromosomal protein 1 (zfy1) (Xenopus laevis (African clawed frog)).